The following is a 205-amino-acid chain: GTP-binding protein rho3 (205 aa).

Position 20–27 (20–27 (GDGAAGKT)) interacts with GTP. An Effector region motif is present at residues 42-50 (YEPTIFENY). GTP contacts are provided by residues 67–71 (DTAGQ) and 125–128 (LKCD). Cysteine methyl ester is present on Cys-202. Cys-202 carries S-geranylgeranyl cysteine lipidation. Residues 203 to 205 (IIA) constitute a propeptide, removed in mature form.

Belongs to the small GTPase superfamily. Rho family. As to quaternary structure, interacts with for3. Palmitoylated by the erf2-erf4 complex.

The protein resides in the cell membrane. Involved in controlling cell shape and septation. Regulates cell separation by modulating the function of the exocyst complex. Involved in post-Golgi vesicle transport. Involved in driving sexual development in a palmitoylation-dependent manner. This is GTP-binding protein rho3 (rho3) from Schizosaccharomyces pombe (strain 972 / ATCC 24843) (Fission yeast).